We begin with the raw amino-acid sequence, 438 residues long: tRNA(Ile)-lysidine synthase (438 aa).

19-24 contacts ATP; it reads SGGIDS.

The protein belongs to the tRNA(Ile)-lysidine synthase family.

It localises to the cytoplasm. It carries out the reaction cytidine(34) in tRNA(Ile2) + L-lysine + ATP = lysidine(34) in tRNA(Ile2) + AMP + diphosphate + H(+). Functionally, ligates lysine onto the cytidine present at position 34 of the AUA codon-specific tRNA(Ile) that contains the anticodon CAU, in an ATP-dependent manner. Cytidine is converted to lysidine, thus changing the amino acid specificity of the tRNA from methionine to isoleucine. The chain is tRNA(Ile)-lysidine synthase from Buchnera aphidicola subsp. Baizongia pistaciae (strain Bp).